The sequence spans 111 residues: Notch-regulated ankyrin repeat-containing protein B (111 aa).

ANK repeat units follow at residues 47 to 76 (EGQTALHQSVIDGNLELVKLLVKFGADTRL) and 80 to 109 (DGWSALHIAAFGGHQDIVLYLITRAKYSSS).

The protein belongs to the NRARP family.

Functionally, regulates independently canonical Wnt and Notch signaling by modulating LEF1 and Notch protein turnover. Stabilizes LEF1, a pivotal transcription factor in the Wnt signaling cascade, by blocking its ubiquitination. Involved in angiogenesis; involved in intersegmental vessel patterning during development. The sequence is that of Notch-regulated ankyrin repeat-containing protein B (nrarpb) from Danio rerio (Zebrafish).